Reading from the N-terminus, the 358-residue chain is Alanine racemase (358 aa).

K35 functions as the Proton acceptor; specific for D-alanine in the catalytic mechanism. K35 is subject to N6-(pyridoxal phosphate)lysine. Position 130 (R130) interacts with substrate. Y255 acts as the Proton acceptor; specific for L-alanine in catalysis. Residue M303 coordinates substrate.

The protein belongs to the alanine racemase family. Pyridoxal 5'-phosphate is required as a cofactor.

The catalysed reaction is L-alanine = D-alanine. It functions in the pathway amino-acid biosynthesis; D-alanine biosynthesis; D-alanine from L-alanine: step 1/1. Functionally, catalyzes the interconversion of L-alanine and D-alanine. May also act on other amino acids. The protein is Alanine racemase (alr) of Shewanella sp. (strain ANA-3).